A 357-amino-acid chain; its full sequence is tRNA-specific 2-thiouridylase MnmA (357 aa).

Residues 7–14 (GLSGGVDS) and Met33 each bind ATP. Residues 94–96 (NPD) form an interaction with target base in tRNA region. The active-site Nucleophile is Cys99. An intrachain disulfide couples Cys99 to Cys195. Gly123 contacts ATP. The interval 145-147 (KDQ) is interaction with tRNA. The active-site Cysteine persulfide intermediate is the Cys195. An interaction with tRNA region spans residues 303–304 (RY).

Belongs to the MnmA/TRMU family.

The protein resides in the cytoplasm. The catalysed reaction is S-sulfanyl-L-cysteinyl-[protein] + uridine(34) in tRNA + AH2 + ATP = 2-thiouridine(34) in tRNA + L-cysteinyl-[protein] + A + AMP + diphosphate + H(+). Functionally, catalyzes the 2-thiolation of uridine at the wobble position (U34) of tRNA, leading to the formation of s(2)U34. The protein is tRNA-specific 2-thiouridylase MnmA of Akkermansia muciniphila (strain ATCC BAA-835 / DSM 22959 / JCM 33894 / BCRC 81048 / CCUG 64013 / CIP 107961 / Muc).